The sequence spans 431 residues: PHD finger-containing protein 1 (431 aa).

Residues 7 to 59 (GPVCQTCGDIGFEEALVFCDSCMFESIHRYCLGITPIPFTEYITWICEDCDNS) form a PHD-type zinc finger. Zn(2+) is bound by residues Cys-10, Cys-13, Cys-25, Cys-28, His-34, Cys-37, Cys-53, and Cys-56. Residues 125–221 (EAADSSSVPD…QESSDSRKPH (97 aa)) form a disordered region. Polar residues predominate over residues 128–139 (DSSSVPDHSSCT). The segment covering 160–171 (KKKKKKKKKKSI) has biased composition (basic residues). The segment covering 191 to 202 (VVEPVEVSSSSP) has biased composition (low complexity). Basic and acidic residues predominate over residues 205–221 (ETMESKRQESSDSRKPH).

In terms of assembly, interacts directly with AIPP3/BDT1.

Its function is as follows. Together with AIPP3/BDT1, cooperates to form a BAH-PHD bivalent histone reader complex able to read histone H3 lysine 27 trimethylation (H3K27me3) histone marks in order to regulate transcription, especially to prevent early flowering; promotes AIPP3/BDT1 binding to H3K27me3. The protein is PHD finger-containing protein 1 of Arabidopsis thaliana (Mouse-ear cress).